The sequence spans 152 residues: D-aminoacyl-tRNA deacylase (152 aa).

Residues 142–143 (GP) carry the Gly-cisPro motif, important for rejection of L-amino acids motif.

Belongs to the DTD family. Homodimer.

It localises to the cytoplasm. It carries out the reaction glycyl-tRNA(Ala) + H2O = tRNA(Ala) + glycine + H(+). It catalyses the reaction a D-aminoacyl-tRNA + H2O = a tRNA + a D-alpha-amino acid + H(+). Its function is as follows. An aminoacyl-tRNA editing enzyme that deacylates mischarged D-aminoacyl-tRNAs. Also deacylates mischarged glycyl-tRNA(Ala), protecting cells against glycine mischarging by AlaRS. Acts via tRNA-based rather than protein-based catalysis; rejects L-amino acids rather than detecting D-amino acids in the active site. By recycling D-aminoacyl-tRNA to D-amino acids and free tRNA molecules, this enzyme counteracts the toxicity associated with the formation of D-aminoacyl-tRNA entities in vivo and helps enforce protein L-homochirality. The protein is D-aminoacyl-tRNA deacylase of Paraburkholderia phytofirmans (strain DSM 17436 / LMG 22146 / PsJN) (Burkholderia phytofirmans).